Consider the following 559-residue polypeptide: Dihydroxy-acid dehydratase (559 aa).

Cys-49 is a [2Fe-2S] cluster binding site. Asp-81 contacts Mg(2+). Cys-122 provides a ligand contact to [2Fe-2S] cluster. Residues Asp-123 and Lys-124 each coordinate Mg(2+). Lys-124 is subject to N6-carboxylysine. Residue Cys-194 coordinates [2Fe-2S] cluster. Position 446 (Glu-446) interacts with Mg(2+). Ser-472 functions as the Proton acceptor in the catalytic mechanism.

The protein belongs to the IlvD/Edd family. As to quaternary structure, homodimer. It depends on [2Fe-2S] cluster as a cofactor. The cofactor is Mg(2+).

It catalyses the reaction (2R)-2,3-dihydroxy-3-methylbutanoate = 3-methyl-2-oxobutanoate + H2O. The catalysed reaction is (2R,3R)-2,3-dihydroxy-3-methylpentanoate = (S)-3-methyl-2-oxopentanoate + H2O. The protein operates within amino-acid biosynthesis; L-isoleucine biosynthesis; L-isoleucine from 2-oxobutanoate: step 3/4. Its pathway is amino-acid biosynthesis; L-valine biosynthesis; L-valine from pyruvate: step 3/4. Functionally, functions in the biosynthesis of branched-chain amino acids. Catalyzes the dehydration of (2R,3R)-2,3-dihydroxy-3-methylpentanoate (2,3-dihydroxy-3-methylvalerate) into 2-oxo-3-methylpentanoate (2-oxo-3-methylvalerate) and of (2R)-2,3-dihydroxy-3-methylbutanoate (2,3-dihydroxyisovalerate) into 2-oxo-3-methylbutanoate (2-oxoisovalerate), the penultimate precursor to L-isoleucine and L-valine, respectively. The chain is Dihydroxy-acid dehydratase from Prochlorococcus marinus subsp. pastoris (strain CCMP1986 / NIES-2087 / MED4).